The primary structure comprises 507 residues: GMP synthase [glutamine-hydrolyzing] (507 aa).

The region spanning 3–190 (KILVIDYGSQ…IQGICGLKGS (188 aa)) is the Glutamine amidotransferase type-1 domain. Residue Cys77 is the Nucleophile of the active site. Catalysis depends on residues His164 and Glu166. The region spanning 191–382 (WTLMDFVENK…LGLPREILYR (192 aa)) is the GMPS ATP-PPase domain. Residue 218 to 224 (SGGVDSS) coordinates ATP.

In terms of assembly, homodimer.

It carries out the reaction XMP + L-glutamine + ATP + H2O = GMP + L-glutamate + AMP + diphosphate + 2 H(+). Its pathway is purine metabolism; GMP biosynthesis; GMP from XMP (L-Gln route): step 1/1. Catalyzes the synthesis of GMP from XMP. In Petrotoga mobilis (strain DSM 10674 / SJ95), this protein is GMP synthase [glutamine-hydrolyzing].